The sequence spans 531 residues: MADAAEGEQPKLSKKELNKLARKAKKDEKAGEKGGNQQQAAAMDQEDASKDFYGSYGLVNSKEKKVLNFLKVKEINVSNATKDVWVRGRIHTTRSKGKNCFLVLRQGVYTVQVAMFMNEKISKQMLKFVSSISKESIVDVYATINKVDNPIESCTQKDVELLAQQVFVVSTSAPKLPLQIEDASRRAPTDEEKASEQENQLAVVNLDTRLDNRVIDLRTPTSHAIFRIQAGICNQFRNILDVRGFVEIMAPKIISAPSEGGANVFEVSYFKGSAYLAQSPQLYKQMAIAGDFEKVYTIGPVFRAEDSNTHRHMTEFVGLDLEMAFNFHYHEVMETIAEVLTQMFKGLQQNYQDEIAAVGNQYPAEPFQFCEPPLILKYPDAITLLRENGIEIGDEDDLSTPVEKFLGKLVKEKYSTDFYVLDKFPLSVRPFYTMPDAHDERYSNSYDMFMRGEEILSGAQRIHDADMLVERAKHHQVDLAKIQSYIDSFKYGCPPHAGGGIGLERVTMLFLGLHNIRLASLFPRDPKRLTP.

The interval 1–45 (MADAAEGEQPKLSKKELNKLARKAKKDEKAGEKGGNQQQAAAMDQ) is disordered. Over residues 8 to 32 (EQPKLSKKELNKLARKAKKDEKAGE) the composition is skewed to basic and acidic residues. Glu-259 is an L-aspartate binding site. Residues 281 to 284 (QLYK) form an aspartate region. Residue Arg-303 participates in L-aspartate binding. ATP is bound by residues 303–305 (RAE), 311–313 (RHM), and Glu-454. The L-aspartate site is built by Ser-457 and Arg-461. 502 to 505 (GLER) contacts ATP.

Belongs to the class-II aminoacyl-tRNA synthetase family. Type 2 subfamily. As to quaternary structure, homodimer.

It localises to the cytoplasm. The enzyme catalyses tRNA(Asp) + L-aspartate + ATP = L-aspartyl-tRNA(Asp) + AMP + diphosphate. The polypeptide is Aspartate--tRNA ligase, cytoplasmic (Caenorhabditis elegans).